A 113-amino-acid polypeptide reads, in one-letter code: Large ribosomal subunit protein bL19 (113 aa).

Belongs to the bacterial ribosomal protein bL19 family.

Its function is as follows. This protein is located at the 30S-50S ribosomal subunit interface and may play a role in the structure and function of the aminoacyl-tRNA binding site. This Mycolicibacterium smegmatis (strain ATCC 700084 / mc(2)155) (Mycobacterium smegmatis) protein is Large ribosomal subunit protein bL19.